Reading from the N-terminus, the 137-residue chain is Phosphoribosyl-AMP cyclohydrolase (137 aa).

Position 84 (aspartate 84) interacts with Mg(2+). Residue cysteine 85 coordinates Zn(2+). Residues aspartate 86 and aspartate 88 each contribute to the Mg(2+) site. Residues cysteine 101 and cysteine 108 each coordinate Zn(2+).

This sequence belongs to the PRA-CH family. Homodimer. The cofactor is Mg(2+). It depends on Zn(2+) as a cofactor.

The protein localises to the cytoplasm. The enzyme catalyses 1-(5-phospho-beta-D-ribosyl)-5'-AMP + H2O = 1-(5-phospho-beta-D-ribosyl)-5-[(5-phospho-beta-D-ribosylamino)methylideneamino]imidazole-4-carboxamide. It participates in amino-acid biosynthesis; L-histidine biosynthesis; L-histidine from 5-phospho-alpha-D-ribose 1-diphosphate: step 3/9. Its function is as follows. Catalyzes the hydrolysis of the adenine ring of phosphoribosyl-AMP. The polypeptide is Phosphoribosyl-AMP cyclohydrolase (Chlorobaculum parvum (strain DSM 263 / NCIMB 8327) (Chlorobium vibrioforme subsp. thiosulfatophilum)).